Reading from the N-terminus, the 311-residue chain is Pyrimidine-specific ribonucleoside hydrolase RihA (311 aa).

H240 is an active-site residue.

Belongs to the IUNH family. RihA subfamily.

Its function is as follows. Hydrolyzes cytidine or uridine to ribose and cytosine or uracil, respectively. The sequence is that of Pyrimidine-specific ribonucleoside hydrolase RihA from Salmonella newport (strain SL254).